The primary structure comprises 330 residues: D-lactate dehydrogenase (330 aa).

Residues 156 to 157 (RI), aspartate 176, 206 to 207 (VP), 233 to 235 (AAR), and aspartate 259 contribute to the NAD(+) site. Residue arginine 235 is part of the active site. Residue glutamate 264 is part of the active site. The active-site Proton donor is histidine 296.

This sequence belongs to the D-isomer specific 2-hydroxyacid dehydrogenase family.

It carries out the reaction (R)-lactate + NAD(+) = pyruvate + NADH + H(+). The protein is D-lactate dehydrogenase (ldhD) of Staphylococcus aureus (strain MSSA476).